A 311-amino-acid chain; its full sequence is MGNFQLEDFVAGWIGGAASVIVGHPLDTVKARLQAGSGYGSTLSCIRTVYRRESVFGFFKGMSFPLASIAVYNSVVFGVFSNTQRFLSHHRCQEPEAGPPHVLSDLLLASMVAGVVSVGLGAPVDLIEIRLQMQTQPFQEANLGLKPRVAALGEQPAYQGPVHCFATIVRTEGLAGLYRGASAMLLRDVPGYCLYFIPYVFLSDWITPEACAGPSPCAVWLAGGMAGAISWGTATPMDVVKSRLQADGVYVNKYRGVLDCMSQSYQKEGLKVFFRGITVNAVRGFPMSAAMFLGYELSLQAIRGDHVVTSP.

Solcar repeat units lie at residues 3–86, 100–205, and 214–301; these read NFQL…TQRF, PHVL…LSDW, and PSPC…SLQA. A run of 6 helical transmembrane segments spans residues 9–29, 61–81, 107–127, 193–213, 217–237, and 277–295; these read FVAGWIGGAASVIVGHPLDTV, GMSFPLASIAVYNSVVFGVFS, LLASMVAGVVSVGLGAPVDLI, CLYFIPYVFLSDWITPEACAG, CAVWLAGGMAGAISWGTATPM, and ITVNAVRGFPMSAAMFLGY.

The protein belongs to the mitochondrial carrier (TC 2.A.29) family.

It is found in the mitochondrion inner membrane. This chain is Solute carrier family 25 member 48 (SLC25A48), found in Bos taurus (Bovine).